Here is an 89-residue protein sequence, read N- to C-terminus: Small ribosomal subunit protein uS15 (89 aa).

The protein belongs to the universal ribosomal protein uS15 family. In terms of assembly, part of the 30S ribosomal subunit. Forms a bridge to the 50S subunit in the 70S ribosome, contacting the 23S rRNA.

Its function is as follows. One of the primary rRNA binding proteins, it binds directly to 16S rRNA where it helps nucleate assembly of the platform of the 30S subunit by binding and bridging several RNA helices of the 16S rRNA. Forms an intersubunit bridge (bridge B4) with the 23S rRNA of the 50S subunit in the ribosome. In Paracoccus denitrificans (strain Pd 1222), this protein is Small ribosomal subunit protein uS15.